The sequence spans 81 residues: uncharacterized protein (81 aa).

This is an uncharacterized protein from Autographa californica nuclear polyhedrosis virus (AcMNPV).